Reading from the N-terminus, the 203-residue chain is Dephospho-CoA kinase (203 aa).

In terms of domain architecture, DPCK spans 3-201 (SVGLTGGIGS…QRYLECAAAA (199 aa)). Residue 11-16 (GSGKTT) participates in ATP binding.

The protein belongs to the CoaE family.

The protein localises to the cytoplasm. It catalyses the reaction 3'-dephospho-CoA + ATP = ADP + CoA + H(+). It functions in the pathway cofactor biosynthesis; coenzyme A biosynthesis; CoA from (R)-pantothenate: step 5/5. Catalyzes the phosphorylation of the 3'-hydroxyl group of dephosphocoenzyme A to form coenzyme A. The protein is Dephospho-CoA kinase of Burkholderia pseudomallei (strain 1710b).